The primary structure comprises 122 residues: Biogenesis of lysosome-related organelles complex 1 subunit BLS1 (122 aa).

Serine 33 carries the phosphoserine modification.

It belongs to the BLOC1S1 family. As to quaternary structure, component of the biogenesis of lysosome-related organelles complex-1 (BLOC-1) composed of at least BLI1, BLS1, CNL1, KXD1, SNN1 and VAB2.

The protein resides in the endosome. Functionally, component of the biogenesis of lysosome-related organelles complex-1 (BLOC-1), a complex involved in endosomal cargo sorting. The polypeptide is Biogenesis of lysosome-related organelles complex 1 subunit BLS1 (BLS1) (Saccharomyces cerevisiae (strain YJM789) (Baker's yeast)).